Here is a 411-residue protein sequence, read N- to C-terminus: LL-diaminopimelate aminotransferase (411 aa).

Substrate contacts are provided by Tyr-15 and Gly-42. Pyridoxal 5'-phosphate is bound by residues Tyr-72, 108-109 (AK), Tyr-132, Asn-187, Tyr-218, and 246-248 (SFS). Substrate contacts are provided by Lys-109, Tyr-132, and Asn-187. Lys-249 bears the N6-(pyridoxal phosphate)lysine mark. Positions 257 and 292 each coordinate pyridoxal 5'-phosphate. The substrate site is built by Asn-292 and Arg-388.

It belongs to the class-I pyridoxal-phosphate-dependent aminotransferase family. LL-diaminopimelate aminotransferase subfamily. As to quaternary structure, homodimer. Requires pyridoxal 5'-phosphate as cofactor.

The enzyme catalyses (2S,6S)-2,6-diaminopimelate + 2-oxoglutarate = (S)-2,3,4,5-tetrahydrodipicolinate + L-glutamate + H2O + H(+). Its pathway is amino-acid biosynthesis; L-lysine biosynthesis via DAP pathway; LL-2,6-diaminopimelate from (S)-tetrahydrodipicolinate (aminotransferase route): step 1/1. Functionally, involved in the synthesis of meso-diaminopimelate (m-DAP or DL-DAP), required for both lysine and peptidoglycan biosynthesis. Catalyzes the direct conversion of tetrahydrodipicolinate to LL-diaminopimelate. This is LL-diaminopimelate aminotransferase from Crocosphaera subtropica (strain ATCC 51142 / BH68) (Cyanothece sp. (strain ATCC 51142)).